Reading from the N-terminus, the 440-residue chain is Tumor necrosis factor receptor superfamily member 10B (440 aa).

Disordered regions lie at residues 1–32 (MEQR…RPGP) and 60–84 (DLAP…CPPG). An N-terminal signal peptide occupies residues 1-55 (MEQRGQNAPAASGARKRHGPGPREARGARPGPRVPKTLVLVVAAVLLLVSAESAL). The Extracellular portion of the chain corresponds to 56 to 210 (ITQQDLAPQQ…SPGTPASPCS (155 aa)). 3 TNFR-Cys repeats span residues 57 to 94 (TQQD…GRDC), 97 to 137 (CKYG…NTVC), and 138 to 178 (QCEE…DIEC). Residues 60–71 (DLAPQQRAAPQQ) are compositionally biased toward low complexity. 7 disulfides stabilise this stretch: Cys81–Cys94, Cys97–Cys113, Cys116–Cys129, Cys119–Cys137, Cys139–Cys153, Cys156–Cys170, and Cys160–Cys178. One copy of the TAPE repeat lies at 192 to 206 (PAVEETVTSSPGTPA). The chain crosses the membrane as a helical span at residues 211–231 (LSGIIIGVTVAAVVLIVAVFV). At 232 to 440 (CKSLLWKKVL…LEGNADSAMS (209 aa)) the chain is on the cytoplasmic side. The Death domain maps to 339-422 (RQCFDDFADL…LAKQKIEDHL (84 aa)).

As to quaternary structure, monomer. Can interact with TRADD and RIPK1. Interacts with HCMV protein UL141; this interaction prevents TNFRSF10B cell surface expression. Two TNFRSF10B monomers interact with a UL141 homodimer. Three TNFRSF10B molecules interact with TNFSF10 homotrimer. In the absence of stimulation, interacts with BIRC2, DDX3X and GSK3B. The interaction with BIRC2 and DDX3X is further enhanced upon receptor stimulation and accompanied by DDX3X and BIRC2 cleavage. (Microbial infection) Glycosylated on Arg residue by S.typhimurium protein Ssek3. Widely expressed in adult and fetal tissues; very highly expressed in tumor cell lines such as HeLaS3, K-562, HL-60, SW480, A-549 and G-361; highly expressed in heart, peripheral blood lymphocytes, liver, pancreas, spleen, thymus, prostate, ovary, uterus, placenta, testis, esophagus, stomach and throughout the intestinal tract; not detectable in brain.

Its subcellular location is the membrane. Functionally, receptor for the cytotoxic ligand TNFSF10/TRAIL. The adapter molecule FADD recruits caspase-8 to the activated receptor. The resulting death-inducing signaling complex (DISC) performs caspase-8 proteolytic activation which initiates the subsequent cascade of caspases (aspartate-specific cysteine proteases) mediating apoptosis. Promotes the activation of NF-kappa-B. Essential for ER stress-induced apoptosis. The protein is Tumor necrosis factor receptor superfamily member 10B (TNFRSF10B) of Homo sapiens (Human).